The chain runs to 304 residues: Protein translocase subunit SecF (304 aa).

Helical transmembrane passes span 20-40 (AKLFFIISGVLIVISLFLIFT), 143-163 (AMMALLYANIGVLIYVAIRFE), 164-184 (LIFAIGAILALVHDVIITLGF), 195-215 (TVVAALLALIGYSLNDTIVVF), 244-266 (LSRTIITSLLTFFTVLSLMIFGG), and 276-298 (LVIGIIVGTYSSIGIASGLVYLI).

Belongs to the SecD/SecF family. SecF subfamily. As to quaternary structure, forms a complex with SecD. Part of the essential Sec protein translocation apparatus which comprises SecA, SecYEG and auxiliary proteins SecDF. Other proteins may also be involved.

Its subcellular location is the cell inner membrane. Part of the Sec protein translocase complex. Interacts with the SecYEG preprotein conducting channel. SecDF uses the proton motive force (PMF) to complete protein translocation after the ATP-dependent function of SecA. The chain is Protein translocase subunit SecF from Calditerrivibrio nitroreducens (strain DSM 19672 / NBRC 101217 / Yu37-1).